We begin with the raw amino-acid sequence, 382 residues long: Polyadenylate-binding protein 5 (382 aa).

RRM domains are found at residues 18-96 (AALY…WSQP), 106-182 (GNIF…RFKF), 199-276 (TNVF…RAQK), and 302-378 (VPIY…LGQA).

It is found in the cytoplasm. Functionally, binds the poly(A) tail of mRNA. May be involved in cytoplasmic regulatory processes of mRNA metabolism. Can probably bind to cytoplasmic RNA sequences other than poly(A) in vivo. The sequence is that of Polyadenylate-binding protein 5 (PABPC5) from Gorilla gorilla gorilla (Western lowland gorilla).